A 726-amino-acid polypeptide reads, in one-letter code: Sister chromatid cohesion protein SCC4 (726 aa).

TPR repeat units follow at residues 7 to 40, 88 to 121, 132 to 165, 229 to 262, 443 to 477, 531 to 564, and 572 to 605; these read AEGL…QISF, FQNY…ASSV, CNFN…ASHI, RLRL…IQQL, PTIL…CIEA, ASIL…AHNH, and AQYL…AKKL. The interval 697–726 is disordered; it reads SVGIEGPSPAPSSSRLVGLDTGKRWGKRRM.

Belongs to the SCC4/mau-2 family. Interacts with SCC2 to form the cohesin loading complex. Expressed ubiquitously.

The protein localises to the nucleus. It localises to the cytoplasm. Essential protein required for cell fate determination during embryogenesis. Involved in sister chromatid cohesion. Forms a complex with SCC2, which is required for the association of the cohesin complex with chromosomes. The chain is Sister chromatid cohesion protein SCC4 from Arabidopsis thaliana (Mouse-ear cress).